The following is a 75-amino-acid chain: Putative antitoxin PH1062.1 (75 aa).

The protein belongs to the UPF0330 family.

Functionally, possibly the antitoxin component of a type II toxin-antitoxin (TA) system. The protein is Putative antitoxin PH1062.1 of Pyrococcus horikoshii (strain ATCC 700860 / DSM 12428 / JCM 9974 / NBRC 100139 / OT-3).